Consider the following 226-residue polypeptide: uncharacterized protein (226 aa).

A helical transmembrane segment spans residues 203 to 225 (FGISDIYTSTLSFGLIISLFYLL).

The protein localises to the membrane. This is an uncharacterized protein from Acanthamoeba polyphaga (Amoeba).